Consider the following 245-residue polypeptide: Probable phosphatase YE2421 (245 aa).

Zn(2+) is bound by residues histidine 7, histidine 9, histidine 15, histidine 40, glutamate 73, histidine 101, histidine 131, aspartate 192, and histidine 194.

This sequence belongs to the PHP family. In terms of assembly, homotrimer. Zn(2+) serves as cofactor.

This chain is Probable phosphatase YE2421, found in Yersinia enterocolitica serotype O:8 / biotype 1B (strain NCTC 13174 / 8081).